A 901-amino-acid chain; its full sequence is MLIKLLTKVFGSRNDRTLRRMRKAVSLINAMEPEMEKLSDDELKAKTNEFRARIEKGESVESLIPEAFAVVREASKRVFGMRHFDVQLLGGMVLNDRCIAEMRTGEGKTLTATLPAYLNALSGKGVHVVTVNDYLAQRDAENNRPLFEFLGMSVGINLPGMPAPAKREAYAADITYGTNNEYGFDYLRDNMAFSPEERVQRKLHYALVDEVDSILIDEARTPLIISGPAEDSSEMYKKVNKIIPHLIRQEKEDSDTFQGEGHFSVDEKARQVNLTERGLVLIEELLVQEGIMDEGESLYSPGNIMLMHHVTAALRAHALFTRDVDYIVKDGEVIIVDEHTGRTMQGRRWSDGLHQAVEAKEGVEIQNENQTLASITFQNYFRLYEKLAGMTGTADTEAFEFSSIYKLDTVVVPTNRPMIRKDLPDLVYMTEAEKIQAIIEDIKERTANGQPVLVGTISIEKSEVVSRELTKAGIKHNVLNAKFHANEAGIVAQAGYPAAVTIATNMAGRGTDIMLGGSWQAEVAALEAPTEEQIAQIKADWQARHDAVLAAGGLHIIGTERHESRRIDNQLRGRSGRQGDPGSSRFYLSMEDALMRIFASDRVSGMMRKLGMKPGEAIEHPWVTKAIANAQRKVESRNFDIRKQLLEYDDVANDQRRAIYSQRNELLDVSDVSDTINSIREDVFKATIDAYIPPQSLEEMWDIPGLQERLKNDFDLELPIAEWLDKEPELHEETLRERILAQSIELYQRKEEVVGAEMMRHFEKGVMLQTLDSLWKEHLAAMDYLRQGIHLRGYAQKDPKQEYKRESFAMFAAMLESLKYEVISTLSKVQVRMPEEVEAMEMQRREEAERLALMQQLSHQDDDAAVAADLAAQTGERKIGRNDPCPCGSGKKYKQCHGRLS.

Residues Gln87, 105 to 109 (GEGKT), and Asp512 contribute to the ATP site. Zn(2+) contacts are provided by Cys885, Cys887, Cys896, and His897.

Belongs to the SecA family. Monomer and homodimer. Part of the essential Sec protein translocation apparatus which comprises SecA, SecYEG and auxiliary proteins SecDF-YajC and YidC. Zn(2+) serves as cofactor.

Its subcellular location is the cell inner membrane. The protein localises to the cytoplasm. The catalysed reaction is ATP + H2O + cellular proteinSide 1 = ADP + phosphate + cellular proteinSide 2.. In terms of biological role, part of the Sec protein translocase complex. Interacts with the SecYEG preprotein conducting channel. Has a central role in coupling the hydrolysis of ATP to the transfer of proteins into and across the cell membrane, serving both as a receptor for the preprotein-SecB complex and as an ATP-driven molecular motor driving the stepwise translocation of polypeptide chains across the membrane. In Salmonella arizonae (strain ATCC BAA-731 / CDC346-86 / RSK2980), this protein is Protein translocase subunit SecA.